A 241-amino-acid polypeptide reads, in one-letter code: MAENQAKKEQVHTVFQNISQKYDRLNNIISFEQHKVWRKHVMSTMNVQKGSKALDVCCGTADWTIALSEAVGSKGQVTGLDFSENMLEVGKQKTASLENIQLVHGDAMNLPFDDNSFDYVTIGFGLRNVPDYLSALKEMHRVLKPGGMVVCLETSQPTLPLFKQIYSLYFKFVMPIFGKMFAKSKEEYEWLQQSTFNFPDKQTLKGLFFEAGFNDIIVRSFTGGVAAMHLGYKENSSSKGD.

S-adenosyl-L-methionine is bound by residues T60, D81, and 106-107; that span reads DA.

It belongs to the class I-like SAM-binding methyltransferase superfamily. MenG/UbiE family.

The catalysed reaction is a 2-demethylmenaquinol + S-adenosyl-L-methionine = a menaquinol + S-adenosyl-L-homocysteine + H(+). Its pathway is quinol/quinone metabolism; menaquinone biosynthesis; menaquinol from 1,4-dihydroxy-2-naphthoate: step 2/2. Its function is as follows. Methyltransferase required for the conversion of demethylmenaquinol (DMKH2) to menaquinol (MKH2). This chain is Demethylmenaquinone methyltransferase, found in Staphylococcus epidermidis (strain ATCC 35984 / DSM 28319 / BCRC 17069 / CCUG 31568 / BM 3577 / RP62A).